The chain runs to 1109 residues: MQRQRSILSFFQKPTAATTKGLVSGDAASGGGGSGGPRFNVKEGDAKGDASVRFAVSKSVDEVRGTDTPPEKVPRRVLPSGFKPAESAGDASSLFSNIMHKFVKVDDRDCSGERSREDVVPLNDSSLCMKANDVIPQFRSNNGKTQERNHAFSFSGRAELRSVEDIGVDGDVPGPETPGMRPRASRLKRVLEDEMTFKEDKVPVLDSNKRLKMLQDPVCGEKKEVNEGTKFEWLESSRIRDANRRRPDDPLYDRKTLHIPPDVFKKMSASQKQYWSVKSEYMDIVLFFKVGKFYELYELDAELGHKELDWKMTMSGVGKCRQVGISESGIDEAVQKLLARGYKVGRIEQLETSDQAKARGANTIIPRKLVQVLTPSTASEGNIGPDAVHLLAIKEIKMELQKCSTVYGFAFVDCAALRFWVGSISDDASCAALGALLMQVSPKEVLYDSKGLSREAQKALRKYTLTGSTAVQLAPVPQVMGDTDAAGVRNIIESNGYFKGSSESWNCAVDGLNECDVALSALGELINHLSRLKLEDVLKHGDIFPYQVYRGCLRIDGQTMVNLEIFNNSCDGGPSGTLYKYLDNCVSPTGKRLLRNWICHPLKDVESINKRLDVVEEFTANSESMQITGQYLHKLPDLERLLGRIKSSVRSSASVLPALLGKKVLKQRVKAFGQIVKGFRSGIDLLLALQKESNMMSLLYKLCKLPILVGKSGLELFLSQFEAAIDSDFPNYQNQDVTDENAETLTILIELFIERATQWSEVIHTISCLDVLRSFAIAASLSAGSMARPVIFPESEATDQNQKTKGPILKIQGLWHPFAVAADGQLPVPNDILLGEARRSSGSIHPRSLLLTGPNMGGKSTLLRATCLAVIFAQLGCYVPCESCEISLVDTIFTRLGASDRIMTGESTFLVECTETASVLQNATQDSLVILDELGRGTSTFDGYAIAYSVFRHLVEKVQCRMLFATHYHPLTKEFASHPRVTSKHMACAFKSRSDYQPRGCDQDLVFLYRLTEGACPESYGLQVALMAGIPNQVVETASGAAQAMKRSIGENFKSSELRSEFSSLHEDWLKSLVGISRVAHNNAPIGEDDYDTLFCLWHEIKSSYCVPK.

Disordered regions lie at residues Thr-19 to Asp-45 and Asp-61 to Glu-86. Residues Asp-61–Pro-74 show a composition bias toward basic and acidic residues. Gly-853–Ser-860 contacts ATP.

It belongs to the DNA mismatch repair MutS family. As to quaternary structure, heterodimer consisting of MSH2-MSH7 (MutS gamma).

It localises to the nucleus. In terms of biological role, component of the post-replicative DNA mismatch repair system (MMR). Forms the heterodimer MutS gamma (MSH2-MSH7 heterodimer) which binds to DNA mismatches thereby initiating DNA repair. MutS gamma recognizes specifically the T/G single base mismatch, but not trinucleotide insertion-deletion loops (IDL). The protein is DNA mismatch repair protein MSH7 (MSH7) of Arabidopsis thaliana (Mouse-ear cress).